The sequence spans 181 residues: Ribulose bisphosphate carboxylase small subunit 3B, chloroplastic (181 aa).

Residues 1 to 54 constitute a chloroplast transit peptide; that stretch reads MASSMLSSAAVVTSPAQATMVAPFTGLKSSAAFPVTRKTNKDITSIASNGGRVS.

The protein belongs to the RuBisCO small chain family. In terms of assembly, heterohexadecamer of 8 large and 8 small subunits.

The protein resides in the plastid. The protein localises to the chloroplast. In terms of biological role, ruBisCO catalyzes two reactions: the carboxylation of D-ribulose 1,5-bisphosphate, the primary event in carbon dioxide fixation, as well as the oxidative fragmentation of the pentose substrate. Both reactions occur simultaneously and in competition at the same active site. Although the small subunit is not catalytic it is essential for maximal activity. The polypeptide is Ribulose bisphosphate carboxylase small subunit 3B, chloroplastic (RBCS-3B) (Arabidopsis thaliana (Mouse-ear cress)).